The sequence spans 124 residues: Fluoride-specific ion channel FluC 2 (124 aa).

4 helical membrane-spanning segments follow: residues 9-29 (LGIFLAAMLGGLVRYLVSTWL), 34-54 (DFPWGTLFVNYLGIFCLIFLV), 67-87 (LILALGTGFCGGLTTFSSLML), and 99-119 (FSLVLYLLLSIGGGLLLAYFL). Residues glycine 77 and threonine 80 each coordinate Na(+).

The protein belongs to the fluoride channel Fluc/FEX (TC 1.A.43) family.

It is found in the cell membrane. The enzyme catalyses fluoride(in) = fluoride(out). Its activity is regulated as follows. Na(+) is not transported, but it plays an essential structural role and its presence is essential for fluoride channel function. In terms of biological role, fluoride-specific ion channel. Important for reducing fluoride concentration in the cell, thus reducing its toxicity. This is Fluoride-specific ion channel FluC 2 from Streptococcus pneumoniae (strain ATCC BAA-255 / R6).